A 184-amino-acid chain; its full sequence is MIPRLKELYYKEIQPQLKETLGYKNTYMGPKVEKVVINMGLGLDGADAKIMKSTEEDLGKITGQKPTVTKFKKSVANFKTRKGTNAGLKVTLRGNKMYEFLDRLVNIALPRIKDFRGLSPKGFDKFGNYTFGIKEHIIFPEVNFDRIDKIRGLDIVVVISALNKDHSFALLEKLNFPFIKKGDN.

It belongs to the universal ribosomal protein uL5 family. In terms of assembly, part of the 50S ribosomal subunit; part of the 5S rRNA/L5/L18/L25 subcomplex. Contacts the 5S rRNA and the P site tRNA. Forms a bridge to the 30S subunit in the 70S ribosome.

Functionally, this is one of the proteins that bind and probably mediate the attachment of the 5S RNA into the large ribosomal subunit, where it forms part of the central protuberance. In the 70S ribosome it contacts protein S13 of the 30S subunit (bridge B1b), connecting the 2 subunits; this bridge is implicated in subunit movement. Contacts the P site tRNA; the 5S rRNA and some of its associated proteins might help stabilize positioning of ribosome-bound tRNAs. The polypeptide is Large ribosomal subunit protein uL5 (Pelagibacter ubique (strain HTCC1062)).